The chain runs to 422 residues: Adhesin YadA (422 aa).

The N-terminal stretch at Met1–Ala25 is a signal peptide. Residues Asn26–Tyr330 are surface exposed passenger domain. Residues Val206 to Tyr236 are a coiled coil. Residues Thr331–Val368 are outer membrane translocation of the passenger domain. The next 4 beta stranded transmembrane spans lie at Gly369–Gly379, Ser383–Val394, Lys401–Ala407, and Asp411–Trp422. The segment at Gly369–Trp422 is translocator domain.

The protein belongs to the autotransporter-2 (AT-2) (TC 1.B.40) family. Homotrimer; trimers are very stable, not disrupted by heating at 95 degrees Celsius for 10 minutes in SDS sample buffer.

It localises to the cell surface. The protein localises to the cell outer membrane. Collagen-binding outer membrane protein forming a fibrillar matrix on the bacterial cell surface and phagocytosis resistance. Promotes initial attachment and invasion of eukaryotic cells. Also protects the bacteria by being responsible for agglutination, serum resistance and complement inactivation. Gly-389 plays an important role in this protein; replacing it with increasingly large polar residues decreases expression levels and trimer stability. Residues larger than Ser (Thr, Asn or His) significantly decrease serume resistance and bacterial autoagglution without affecting adhesion to host cells or host cell cytokine production. This Yersinia enterocolitica serotype O:8 / biotype 1B (strain NCTC 13174 / 8081) protein is Adhesin YadA.